Reading from the N-terminus, the 341-residue chain is DnaJ homolog subfamily C member 22 (341 aa).

The TM2 domain maps to 3–50; that stretch reads KGLLVTYALWAVGGPAGLHHLYLGRDSHALLWMLTLGGGGLGWLWEFW. The next 7 membrane-spanning stretches (helical) occupy residues 5–25, 30–50, 81–101, 105–125, 135–155, 185–205, and 218–238; these read LLVT…HLYL, HALL…WEFW, FAAQ…SLSS, FYIV…AAVG, LGAA…ILPI, LGLA…CNTA, and FLNW…VLLL. The 65-residue stretch at 277–341 folds into the J domain; it reads LAYQVLGLSE…QPRKPRGSRR (65 aa).

The protein resides in the membrane. Functionally, may function as a co-chaperone. The protein is DnaJ homolog subfamily C member 22 (DNAJC22) of Pongo abelii (Sumatran orangutan).